A 272-amino-acid chain; its full sequence is Urease accessory protein UreD (272 aa).

It belongs to the UreD family. As to quaternary structure, ureD, UreF and UreG form a complex that acts as a GTP-hydrolysis-dependent molecular chaperone, activating the urease apoprotein by helping to assemble the nickel containing metallocenter of UreC. The UreE protein probably delivers the nickel.

The protein localises to the cytoplasm. In terms of biological role, required for maturation of urease via the functional incorporation of the urease nickel metallocenter. This chain is Urease accessory protein UreD, found in Opitutus terrae (strain DSM 11246 / JCM 15787 / PB90-1).